The primary structure comprises 221 residues: Peroxiredoxin 2 (221 aa).

In terms of domain architecture, Thioredoxin spans 15 to 170; that stretch reads PQIGAPAPDF…IIRIIDALQT (156 aa). Catalysis depends on C56, which acts as the Cysteine sulfenic acid (-SOH) intermediate. Residue R133 coordinates substrate. A disulfide bridge links C211 with C217.

The protein belongs to the peroxiredoxin family. Prx6 subfamily. In terms of assembly, homodecamer. Pentamer of dimers that assemble into a ring structure.

It is found in the cytoplasm. The enzyme catalyses a hydroperoxide + [thioredoxin]-dithiol = an alcohol + [thioredoxin]-disulfide + H2O. Functionally, thiol-specific peroxidase that catalyzes the reduction of hydrogen peroxide and organic hydroperoxides to water and alcohols, respectively. Plays a role in cell protection against oxidative stress by detoxifying peroxides. This chain is Peroxiredoxin 2, found in Caldanaerobacter subterraneus subsp. tengcongensis (strain DSM 15242 / JCM 11007 / NBRC 100824 / MB4) (Thermoanaerobacter tengcongensis).